Consider the following 423-residue polypeptide: Vitamin D3 receptor (423 aa).

Positions 24, 27, 41, 44, 60, 66, 76, and 79 each coordinate Zn(2+). 2 consecutive NR C4-type zinc fingers follow at residues 24–44 (CGVC…CEGC) and 60–84 (CPFN…LKRC). Positions 24–89 (CGVCGDRATG…RLKRCVDIGM (66 aa)) form a DNA-binding region, nuclear receptor. The tract at residues 97-126 (DEEVQRKREMIMKRKEEEALKDSLRPKLSE) is hinge. The NR LBD domain maps to 127-419 (EQQHIIAILL…LTPLVLEVFG (293 aa)). Tyr143 serves as a coordination point for calcitriol. A disordered region spans residues 159 to 180 (MDGSTGSYSPRPTLSFSGNSSS). Low complexity predominate over residues 171-180 (TLSFSGNSSS). A calcitriol-binding site is contributed by Ser233. Positions 242-260 (KMIPGFRDLTSDDQIVLLK) are interaction with coactivator LXXLL motif. Calcitriol contacts are provided by Arg270, Ser274, His301, and His393. The 9aaTAD signature appears at 412-420 (PLVLEVFGN).

It belongs to the nuclear hormone receptor family. NR1 subfamily. In terms of assembly, homodimer in the absence of bound vitamin D3. Heterodimer with RXRA after vitamin D3 binding. Interacts with MED1 and NCOA6. Interacts with MED1, NCOA1, NCOA2, NCOA3 and NCOA6 coactivators, leading to a strong increase of transcription of target genes. Interacts with the corepressor NCOR1. Interacts with SNW1. Interacts with IRX4, the interaction does not affect its transactivation activity. Interacts with CRY1. Interacts with CRY2 in a ligand-dependent manner. Ubiquitinated by UBR5, leading to its degradation: UBR5 specifically recognizes and binds ligand-bound VDR when it is not associated with coactivators (NCOAs). In presence of NCOAs, the UBR5-degron is not accessible, preventing its ubiquitination and degradation. Detected in intestine and kidney.

It is found in the nucleus. Its subcellular location is the cytoplasm. In terms of biological role, nuclear receptor for calcitriol, the active form of vitamin D3 which mediates the action of this vitamin on cells. Enters the nucleus upon vitamin D3 binding where it forms heterodimers with the retinoid X receptor/RXR. The VDR-RXR heterodimers bind to specific response elements on DNA and activate the transcription of vitamin D3-responsive target genes. Plays a central role in calcium homeostasis. Also functions as a receptor for the secondary bile acid lithocholic acid (LCA) and its metabolites. The protein is Vitamin D3 receptor (Vdr) of Rattus norvegicus (Rat).